A 90-amino-acid polypeptide reads, in one-letter code: uncharacterized protein (90 aa).

The signal sequence occupies residues M1–S18. The disordered stretch occupies residues Q28–P50.

The protein resides in the secreted. This is an uncharacterized protein from Homo sapiens (Human).